A 166-amino-acid chain; its full sequence is Regulatory protein RecX (166 aa).

The protein belongs to the RecX family.

The protein localises to the cytoplasm. Functionally, modulates RecA activity. This chain is Regulatory protein RecX, found in Escherichia coli (strain SMS-3-5 / SECEC).